A 93-amino-acid chain; its full sequence is Probable Fe(2+)-trafficking protein (93 aa).

It belongs to the Fe(2+)-trafficking protein family.

In terms of biological role, could be a mediator in iron transactions between iron acquisition and iron-requiring processes, such as synthesis and/or repair of Fe-S clusters in biosynthetic enzymes. The protein is Probable Fe(2+)-trafficking protein of Polaromonas naphthalenivorans (strain CJ2).